Consider the following 228-residue polypeptide: Cytochrome c oxidase subunit 2 (228 aa).

The Mitochondrial intermembrane portion of the chain corresponds to 1 to 26 (MSTWANLGLQDSASPLMEQLIFFHDH). Residues 27–48 (ALLILVMITVLVGYLMFMLFFN) traverse the membrane as a helical segment. Over 49–62 (NYVNRFLLHGQLIE) the chain is Mitochondrial matrix. Residues 63 to 82 (MIWTILPAIILLFIALPSLR) form a helical membrane-spanning segment. Residues 83–228 (LLYLLDEINE…FIKWISSNNS (146 aa)) lie on the Mitochondrial intermembrane side of the membrane. Cu cation is bound by residues H161, C196, E198, C200, H204, and M207. Mg(2+) is bound at residue E198.

Belongs to the cytochrome c oxidase subunit 2 family. As to quaternary structure, component of the cytochrome c oxidase (complex IV, CIV), a multisubunit enzyme composed of a catalytic core of 3 subunits and several supernumerary subunits. The complex exists as a monomer or a dimer and forms supercomplexes (SCs) in the inner mitochondrial membrane with ubiquinol-cytochrome c oxidoreductase (cytochrome b-c1 complex, complex III, CIII). Cu cation serves as cofactor.

Its subcellular location is the mitochondrion inner membrane. The catalysed reaction is 4 Fe(II)-[cytochrome c] + O2 + 8 H(+)(in) = 4 Fe(III)-[cytochrome c] + 2 H2O + 4 H(+)(out). In terms of biological role, component of the cytochrome c oxidase, the last enzyme in the mitochondrial electron transport chain which drives oxidative phosphorylation. The respiratory chain contains 3 multisubunit complexes succinate dehydrogenase (complex II, CII), ubiquinol-cytochrome c oxidoreductase (cytochrome b-c1 complex, complex III, CIII) and cytochrome c oxidase (complex IV, CIV), that cooperate to transfer electrons derived from NADH and succinate to molecular oxygen, creating an electrochemical gradient over the inner membrane that drives transmembrane transport and the ATP synthase. Cytochrome c oxidase is the component of the respiratory chain that catalyzes the reduction of oxygen to water. Electrons originating from reduced cytochrome c in the intermembrane space (IMS) are transferred via the dinuclear copper A center (CU(A)) of subunit 2 and heme A of subunit 1 to the active site in subunit 1, a binuclear center (BNC) formed by heme A3 and copper B (CU(B)). The BNC reduces molecular oxygen to 2 water molecules using 4 electrons from cytochrome c in the IMS and 4 protons from the mitochondrial matrix. The polypeptide is Cytochrome c oxidase subunit 2 (mt:CoII) (Drosophila simulans (Fruit fly)).